The sequence spans 205 residues: Small ribosomal subunit protein uS4 (205 aa).

The span at 1 to 12 shows a compositional bias: basic residues; it reads MSKRVQAKHKLD. Residues 1–49 are disordered; it reads MSKRVQAKHKLDRRMGQNIWGRPKSPVNRREYGPGQHGQRRKGKMSDFG. Residues 94-155 enclose the S4 RNA-binding domain; that stretch reads RRLDAVVYRS…ASRQLEIVVV (62 aa).

It belongs to the universal ribosomal protein uS4 family. As to quaternary structure, part of the 30S ribosomal subunit. Contacts protein S5. The interaction surface between S4 and S5 is involved in control of translational fidelity.

In terms of biological role, one of the primary rRNA binding proteins, it binds directly to 16S rRNA where it nucleates assembly of the body of the 30S subunit. Functionally, with S5 and S12 plays an important role in translational accuracy. The polypeptide is Small ribosomal subunit protein uS4 (Methylorubrum populi (strain ATCC BAA-705 / NCIMB 13946 / BJ001) (Methylobacterium populi)).